We begin with the raw amino-acid sequence, 143 residues long: Beta/delta-urticatoxin-Uf2b (143 aa).

A signal peptide spans 1–18 (MGAIVLVALMALVASSSA). A propeptide spanning residues 19-80 (FSDIEHNIMK…MMLSGRPQPN (62 aa)) is cleaved from the precursor. 6 disulfides stabilise this stretch: Cys83-Cys100, Cys90-Cys105, Cys99-Cys113, Cys115-Cys129, Cys122-Cys134, and Cys128-Cys142.

It belongs to the urticatoxin-2 family. Expressed in trichomes, that are stiff epidermal hairs located on the surface of petioles and leaves.

The protein resides in the secreted. In terms of biological role, plant defense neurotoxin that causes pain and systemic symptoms in mammals via modulation of voltage-gated sodium channels (Nav). Potent modulator of human Nav1.5/SCN5A (EC(50)=55 nM), Nav1.6/SCN8A (EC(50)=0.86 nM), and Nav1.7/SCN9A (EC(50)=208 nM), where it shifts the activation threshold to more negative potentials and delays fast inactivation. Also shifts the voltage-dependence of steady-state fast inactivation of Nav1.6/SCN8A, but not that of Nav1.5/SCN5A or Nav1.7/SCN9A. On Nav1.7/SCN9A, principally acts by binding to extracellular loops of domain IV (Nav site 3). In vivo, intraplantar injection into mice causes numerous dose-dependent, immediate, and long-lasting spontaneous pain behaviors, while no swelling is observed in the injected paw. At the highest doses tested, systemic symptoms including hypokinesia and hypersalivation are observed. This is Beta/delta-urticatoxin-Uf2b from Urtica ferox (Tree nettle).